We begin with the raw amino-acid sequence, 160 residues long: Protein FrzA (160 aa).

In terms of domain architecture, CheW-like spans 14 to 155 (EQEFFCFRVG…FSKLLQTARQ (142 aa)).

Functionally, necessary for proper aggregation of cells to form fruiting bodies. FRZ genes define a system of signal transduction analogous to the enterobacterial chemotaxis systems. The chain is Protein FrzA (frzA) from Myxococcus xanthus.